The primary structure comprises 186 residues: Peptidyl-tRNA hydrolase (186 aa).

Residue Tyr-14 coordinates tRNA. The Proton acceptor role is filled by His-19. Positions 64, 66, and 112 each coordinate tRNA.

The protein belongs to the PTH family. As to quaternary structure, monomer.

It localises to the cytoplasm. It catalyses the reaction an N-acyl-L-alpha-aminoacyl-tRNA + H2O = an N-acyl-L-amino acid + a tRNA + H(+). Its function is as follows. Hydrolyzes ribosome-free peptidyl-tRNAs (with 1 or more amino acids incorporated), which drop off the ribosome during protein synthesis, or as a result of ribosome stalling. Functionally, catalyzes the release of premature peptidyl moieties from peptidyl-tRNA molecules trapped in stalled 50S ribosomal subunits, and thus maintains levels of free tRNAs and 50S ribosomes. The protein is Peptidyl-tRNA hydrolase of Bacillus cereus (strain ATCC 14579 / DSM 31 / CCUG 7414 / JCM 2152 / NBRC 15305 / NCIMB 9373 / NCTC 2599 / NRRL B-3711).